A 364-amino-acid polypeptide reads, in one-letter code: Protein-glutamate methylesterase/protein-glutamine glutaminase (364 aa).

Residues 7–124 enclose the Response regulatory domain; sequence RALIVDDSAL…SQNMPDMAEE (118 aa). A 4-aspartylphosphate modification is found at Asp58. The CheB-type methylesterase domain maps to 167-364; it reads ETTSFVRNVL…MAEEIVKIIS (198 aa). Catalysis depends on residues Ser181, His208, and Asp308.

This sequence belongs to the CheB family. Phosphorylated by CheA. Phosphorylation of the N-terminal regulatory domain activates the methylesterase activity.

The protein resides in the cytoplasm. The catalysed reaction is [protein]-L-glutamate 5-O-methyl ester + H2O = L-glutamyl-[protein] + methanol + H(+). The enzyme catalyses L-glutaminyl-[protein] + H2O = L-glutamyl-[protein] + NH4(+). In terms of biological role, involved in chemotaxis. Part of a chemotaxis signal transduction system that modulates chemotaxis in response to various stimuli. Catalyzes the demethylation of specific methylglutamate residues introduced into the chemoreceptors (methyl-accepting chemotaxis proteins or MCP) by CheR. Also mediates the irreversible deamidation of specific glutamine residues to glutamic acid. In Methanosarcina barkeri (strain Fusaro / DSM 804), this protein is Protein-glutamate methylesterase/protein-glutamine glutaminase.